Reading from the N-terminus, the 191-residue chain is Protein GrpE (191 aa).

It belongs to the GrpE family. Homodimer.

Its subcellular location is the cytoplasm. Participates actively in the response to hyperosmotic and heat shock by preventing the aggregation of stress-denatured proteins, in association with DnaK and GrpE. It is the nucleotide exchange factor for DnaK and may function as a thermosensor. Unfolded proteins bind initially to DnaJ; upon interaction with the DnaJ-bound protein, DnaK hydrolyzes its bound ATP, resulting in the formation of a stable complex. GrpE releases ADP from DnaK; ATP binding to DnaK triggers the release of the substrate protein, thus completing the reaction cycle. Several rounds of ATP-dependent interactions between DnaJ, DnaK and GrpE are required for fully efficient folding. The polypeptide is Protein GrpE (Listeria welshimeri serovar 6b (strain ATCC 35897 / DSM 20650 / CCUG 15529 / CIP 8149 / NCTC 11857 / SLCC 5334 / V8)).